We begin with the raw amino-acid sequence, 132 residues long: Small ribosomal subunit protein uS8 (132 aa).

Belongs to the universal ribosomal protein uS8 family. In terms of assembly, part of the 30S ribosomal subunit. Contacts proteins S5 and S12.

In terms of biological role, one of the primary rRNA binding proteins, it binds directly to 16S rRNA central domain where it helps coordinate assembly of the platform of the 30S subunit. The chain is Small ribosomal subunit protein uS8 from Streptococcus agalactiae serotype Ia (strain ATCC 27591 / A909 / CDC SS700).